The primary structure comprises 90 residues: Small ribosomal subunit protein uS15c (90 aa).

Belongs to the universal ribosomal protein uS15 family. As to quaternary structure, part of the 30S ribosomal subunit.

Its subcellular location is the plastid. The protein resides in the chloroplast. The protein is Small ribosomal subunit protein uS15c (rps15) of Daucus carota (Wild carrot).